A 265-amino-acid polypeptide reads, in one-letter code: Hydroxyethylthiazole kinase (265 aa).

Met50 is a substrate binding site. ATP-binding residues include Arg125 and Thr171. Gly198 contacts substrate.

This sequence belongs to the Thz kinase family. Mg(2+) is required as a cofactor.

It carries out the reaction 5-(2-hydroxyethyl)-4-methylthiazole + ATP = 4-methyl-5-(2-phosphooxyethyl)-thiazole + ADP + H(+). It functions in the pathway cofactor biosynthesis; thiamine diphosphate biosynthesis; 4-methyl-5-(2-phosphoethyl)-thiazole from 5-(2-hydroxyethyl)-4-methylthiazole: step 1/1. Its function is as follows. Catalyzes the phosphorylation of the hydroxyl group of 4-methyl-5-beta-hydroxyethylthiazole (THZ). This Salmonella typhimurium (strain LT2 / SGSC1412 / ATCC 700720) protein is Hydroxyethylthiazole kinase.